A 670-amino-acid polypeptide reads, in one-letter code: CLK4-associating serine/arginine rich protein (670 aa).

Residue S101 is modified to Phosphoserine. Disordered regions lie at residues 171 to 232 and 258 to 670; these read TVAE…GMAD and EKAM…HYRH. The span at 182-214 shows a compositional bias: acidic residues; that stretch reads PEEEESPAEEESNSDEDEVIPDIDVEVDVDELN. Positions 265 to 283 are enriched in basic residues; that stretch reads RRSRRQRREFREKRLRGRK. 2 positions are modified to phosphoserine: S285 and S294. The span at 290 to 313 shows a compositional bias: basic and acidic residues; it reads ARRDSPTYDPYKRSPSESSSESRS. Phosphothreonine is present on T327. Residues S331 and S335 each carry the phosphoserine modification. Over residues 340–355 the composition is skewed to low complexity; it reads AAAAAAAAASGAATGK. Over residues 356-365 the composition is skewed to pro residues; the sequence is PPAPPQPGGP. Low complexity predominate over residues 378–400; the sequence is STSSSSSSASRTSSSRSRSSSSS. Composition is skewed to basic residues over residues 411-443 and 481-491; these read SGRH…RRHS and RGGRGPRHHSS. A compositionally biased stretch (low complexity) spans 492 to 529; sequence SRSSWSLSPSRSRSLTRSRSPSLSRSRSLSRSRSQSHS. Position 543 is a phosphoserine (S543). The residue at position 569 (T569) is a Phosphothreonine. Residues 581-643 are a coiled coil; it reads ALNRQFKADK…ERQYSRQSRS (63 aa). 2 stretches are compositionally biased toward basic and acidic residues: residues 586–613 and 621–637; these read FKAD…ELRA and KERE…ERQY. The span at 638-647 shows a compositional bias: low complexity; sequence SRQSRSPSPR. A compositionally biased stretch (basic residues) spans 655-670; that stretch reads SRRRSRSRSRSPHYRH.

It belongs to the splicing factor SR family. As to quaternary structure, probably interacts with CLK4. Phosphorylated in vitro by CLK4.

It localises to the nucleus. Probably functions as an alternative splicing regulator. May regulate the mRNA splicing of genes such as CLK1. May act by regulating members of the CLK kinase family. The sequence is that of CLK4-associating serine/arginine rich protein (CLASRP) from Bos taurus (Bovine).